The chain runs to 397 residues: Ethanolaminephosphotransferase 1 (397 aa).

N-acetylalanine is present on Ala2. The next 10 membrane-spanning stretches (helical) occupy residues 47-69 (WLAPNLITFSGFLLVVFNFLLMA), 84-103 (HVPDWVWIVVGILNFVAYTL), 123-145 (LFDHGLDSWSCVYFVVTVYSIFG), 150-172 (GVSVFVLYLLLWVVLFSFILSHW), 179-201 (ILFLPWGYDISQVTISFVYIVTA), 221-243 (LFTAMIIGCALCVTLPMSLLNFF), 256-278 (VYEAMVPLFSPCLLFILSTAWIL), 291-310 (VFYFMVGTAFANSTCQLIVC), 317-339 (CPTLNWLLVPLFLVVLVVNLGVA), and 344-366 (SILLYTLTTAFTLAHIHYGVRVV). Position 387 (Sec387) is a non-standard amino acid, selenocysteine.

Belongs to the CDP-alcohol phosphatidyltransferase class-I family. Mg(2+) serves as cofactor. It depends on Mn(2+) as a cofactor. Widely expressed. Abundant in brain, placenta, liver and pancreas, followed by heart, skeletal muscle, lung and kidney. In brain it is strongly expressed in cerebellum, followed by the occipital pole and the frontal lobe.

It localises to the endoplasmic reticulum membrane. It carries out the reaction CDP-ethanolamine + a 1,2-diacyl-sn-glycerol = a 1,2-diacyl-sn-glycero-3-phosphoethanolamine + CMP + H(+). It catalyses the reaction 1-O-alkyl-2-acyl-sn-glycerol + CDP-ethanolamine = a 1-O-alkyl-2-acyl-sn-glycero-3-phosphoethanolamine + CMP + H(+). Its pathway is phospholipid metabolism; phosphatidylethanolamine biosynthesis; phosphatidylethanolamine from ethanolamine: step 3/3. Ethanolaminephosphotransferase that catalyzes the transfer of phosphoethanolamine (PE) from CDP-ethanolamine to lipid acceptors, the final step in the synthesis of PE via the 'Kennedy' pathway. PE is the second most abundant phospholipid of membranes in mammals and is involved in various membrane-related cellular processes. The enzyme is critical for the synthesis of several PE species and also catalyzes the synthesis of plasmanyl-PE, a lipid required for proper myelination and neurodevelopment, from 1-alkyl-2-acylglycerol. This is Ethanolaminephosphotransferase 1 from Homo sapiens (Human).